The primary structure comprises 123 residues: Seminal vesicle secretory protein 5 (123 aa).

A signal peptide spans 1–21 (MSPTGFFLLTVLLVLVTEAAS). The tract at residues 50-123 (GSSSTFGAFS…TKVKTRITRK (74 aa)) is disordered. Positions 64-75 (SRSNFKSKSPSS) are enriched in low complexity. The segment covering 77–87 (TREKVNEESRS) has biased composition (basic and acidic residues).

Belongs to the SVP2/SVP5/SVP6 family. In terms of tissue distribution, testis.

Its subcellular location is the secreted. It is found in the extracellular space. This chain is Seminal vesicle secretory protein 5 (Svs5), found in Rattus norvegicus (Rat).